Consider the following 103-residue polypeptide: Small ribosomal subunit protein uS10 (103 aa).

It belongs to the universal ribosomal protein uS10 family. In terms of assembly, part of the 30S ribosomal subunit.

In terms of biological role, involved in the binding of tRNA to the ribosomes. This is Small ribosomal subunit protein uS10 from Natranaerobius thermophilus (strain ATCC BAA-1301 / DSM 18059 / JW/NM-WN-LF).